The chain runs to 427 residues: Serine hydroxymethyltransferase (427 aa).

Residues leucine 124 and 128 to 130 contribute to the (6S)-5,6,7,8-tetrahydrofolate site; that span reads GHL. N6-(pyridoxal phosphate)lysine is present on lysine 233.

Belongs to the SHMT family. As to quaternary structure, homodimer. It depends on pyridoxal 5'-phosphate as a cofactor.

It localises to the cytoplasm. It catalyses the reaction (6R)-5,10-methylene-5,6,7,8-tetrahydrofolate + glycine + H2O = (6S)-5,6,7,8-tetrahydrofolate + L-serine. The protein operates within one-carbon metabolism; tetrahydrofolate interconversion. It participates in amino-acid biosynthesis; glycine biosynthesis; glycine from L-serine: step 1/1. Its function is as follows. Catalyzes the reversible interconversion of serine and glycine with tetrahydrofolate (THF) serving as the one-carbon carrier. This reaction serves as the major source of one-carbon groups required for the biosynthesis of purines, thymidylate, methionine, and other important biomolecules. Also exhibits THF-independent aldolase activity toward beta-hydroxyamino acids, producing glycine and aldehydes, via a retro-aldol mechanism. The protein is Serine hydroxymethyltransferase of Acidothermus cellulolyticus (strain ATCC 43068 / DSM 8971 / 11B).